The primary structure comprises 152 residues: Transcriptional regulator MraZ (152 aa).

SpoVT-AbrB domains are found at residues 5–52 (ATLV…TLPE) and 81–124 (ASEC…DETT).

It belongs to the MraZ family. Forms oligomers.

It localises to the cytoplasm. It is found in the nucleoid. Its function is as follows. Negatively regulates its own expression and that of the subsequent genes in the proximal part of the division and cell wall (dcw) gene cluster. Acts by binding directly to DNA. May also regulate the expression of genes outside the dcw cluster. In Enterobacter sp. (strain 638), this protein is Transcriptional regulator MraZ.